The chain runs to 516 residues: MLLLLLLIVVTTLYIFAKLHYTKWERLGFESDKATIPLGSMAKVFHKERPFGLVMSDIYDKCHEKVVGIYLFFKPALLVRDAELARQILTTDFNSFHDRGLYVDEKNDPMSANLFVMEGQSWRTLRMKLAPSFSSGKLKGMFETVDDVAAKLLNHLNERLKDGQSHVLEIKSILTTYAVDIIGSVIFGLEIDSFTHPDNEFRVLSDRLFNPKKSTMLQRFRNLSNFICPPLAKLLSRLGAKDPITYRLRDIVKRTIEFREEKGVVRKDLLQLFIQLRNTGKISDDNDKLWHDVESTAENLKAMSIDMIASNSFLFYIAGSETTAATTSFTIYELAMYPEILKKAQSEVDECLQRHGLKPQGRLTYEAIQDMKYLDLCVMETTRKYPGLPFLNRKCTQDFQVPDTKLTIPKETGIIISLLGIHRDPQYFPQPEDYRPERFADESKDYDPAAYMPFGEGPRHCIAQRMGVMNSKVALAKILANFNIQPMPRQEVEFKFHSAPVLVPVNGLNVGLSKRW.

Cys-461 lines the heme pocket.

It belongs to the cytochrome P450 family. Heme is required as a cofactor.

It is found in the endoplasmic reticulum membrane. The protein localises to the microsome membrane. Functionally, metabolizes pyrethroid insecticides and other xenobiotics. The chain is Cytochrome P450 6d1 (CYP6D1) from Musca domestica (House fly).